The sequence spans 179 residues: uncharacterized protein (179 aa).

The disordered stretch occupies residues 160 to 179; the sequence is QPIEPNGTQPATETKTPVGV. Residues 165 to 179 are compositionally biased toward polar residues; the sequence is NGTQPATETKTPVGV.

This sequence belongs to the Dps family.

This is an uncharacterized protein from Anabaena variabilis.